We begin with the raw amino-acid sequence, 128 residues long: Small ribosomal subunit protein uS12 (128 aa).

The interval 1–25 is disordered; that stretch reads MPTIQQLIRRGRKTKASKTASPALE. Aspartate 89 carries the 3-methylthioaspartic acid modification. The tract at residues 101–128 is disordered; that stretch reads SLDTSGVADRRNSRSKYGAKRPKEAAAK.

Belongs to the universal ribosomal protein uS12 family. Part of the 30S ribosomal subunit. Contacts proteins S8 and S17. May interact with IF1 in the 30S initiation complex.

Its function is as follows. With S4 and S5 plays an important role in translational accuracy. In terms of biological role, interacts with and stabilizes bases of the 16S rRNA that are involved in tRNA selection in the A site and with the mRNA backbone. Located at the interface of the 30S and 50S subunits, it traverses the body of the 30S subunit contacting proteins on the other side and probably holding the rRNA structure together. The combined cluster of proteins S8, S12 and S17 appears to hold together the shoulder and platform of the 30S subunit. The polypeptide is Small ribosomal subunit protein uS12 (Chlorobium phaeobacteroides (strain BS1)).